We begin with the raw amino-acid sequence, 129 residues long: Holo-[acyl-carrier-protein] synthase (129 aa).

The Mg(2+) site is built by Asp8 and Glu58.

Belongs to the P-Pant transferase superfamily. AcpS family. Mg(2+) serves as cofactor.

The protein localises to the cytoplasm. It carries out the reaction apo-[ACP] + CoA = holo-[ACP] + adenosine 3',5'-bisphosphate + H(+). Functionally, transfers the 4'-phosphopantetheine moiety from coenzyme A to a Ser of acyl-carrier-protein. The polypeptide is Holo-[acyl-carrier-protein] synthase (Acidithiobacillus ferrooxidans (strain ATCC 53993 / BNL-5-31) (Leptospirillum ferrooxidans (ATCC 53993))).